The following is a 423-amino-acid chain: Histone deacetylase 14, chloroplastic (423 aa).

The transit peptide at 1–44 (MSMALIVRPFFVPGSAGISGSRNICKKNQWRKYLLKPSGSSINC) directs the protein to the chloroplast. A histone deacetylase region spans residues 62–392 (DARLIYSVSA…FRALLGEDSL (331 aa)). H202 serves as the catalytic Proton donor/acceptor. Residues D239, H241, and D326 each coordinate Zn(2+).

Belongs to the histone deacetylase family. As to quaternary structure, interacts with PP2A2. Zn(2+) is required as a cofactor. In terms of tissue distribution, expressed in stems, leaves, flowers, siliques and mature seeds.

It localises to the nucleus. The protein resides in the cytoplasm. Its subcellular location is the plastid. The protein localises to the chloroplast stroma. It is found in the mitochondrion. It carries out the reaction N-acetylserotonin + H2O = serotonin + acetate. The catalysed reaction is N-acetyltyramine + H2O = tyramine + acetate. It catalyses the reaction N-acetyltryptamine + H2O = tryptamine + acetate. The enzyme catalyses melatonin + H2O = 5-methoxytryptamine + acetate. Its activity is inhibited by trichostatin A (TSA), a known histone deacetylase inhibitor. In terms of biological role, regulates lysine acetylation levels of plastid proteins related to photosynthesis. Involved in the regulation of the activation state of RuBisCO, which is controlled by lysine acetylation of RuBisCO activase under low-light conditions. Associates with alpha- and beta-tubulins and deacetylate alpha-tubulin. Does not seem to be required for the cellular patterning in the root epidermis. Involved in the regulation of melatonin biosynthesis by catalyzing the deacetylation of N-acetylserotonin to produce serotonin. N-acetylserotonin is methylated by acetylserotonin O-methyltransferase (ASMT) to produce melatonin (N-acetyl-5-methoxytryptamine). Deacetylates melatonin to produce 5-methoxytryptamine. In vitro, deacetylates N-acetyltyramine and N-acetyltryptamine to produce tyramine and tryptamine, respectively. This Arabidopsis thaliana (Mouse-ear cress) protein is Histone deacetylase 14, chloroplastic.